Here is a 66-residue protein sequence, read N- to C-terminus: Surface composition regulator (66 aa).

It belongs to the GlgS family.

Functionally, major determinant of cell surface composition. Negatively regulates motility, adhesion and synthesis of biofilm exopolysaccharides. The sequence is that of Surface composition regulator from Escherichia coli O139:H28 (strain E24377A / ETEC).